Here is a 369-residue protein sequence, read N- to C-terminus: Flagellar P-ring protein (369 aa).

Residues 1–23 (MIKQFAVSLLLVLLTLVTTTASA) form the signal peptide.

The protein belongs to the FlgI family. The basal body constitutes a major portion of the flagellar organelle and consists of four rings (L,P,S, and M) mounted on a central rod.

The protein localises to the periplasm. The protein resides in the bacterial flagellum basal body. Functionally, assembles around the rod to form the L-ring and probably protects the motor/basal body from shearing forces during rotation. This is Flagellar P-ring protein from Photorhabdus laumondii subsp. laumondii (strain DSM 15139 / CIP 105565 / TT01) (Photorhabdus luminescens subsp. laumondii).